The primary structure comprises 189 residues: 5-hmdU DNA kinase (189 aa).

It belongs to the thymidylate kinase family. 5-hmdU DNA kinase subfamily.

It catalyses the reaction 5-hydroxymethyl-dUMP in DNA + ATP = 5-phosphomethyl-dUMP in DNA + ADP + H(+). In terms of biological role, phosphorylates 5-hydroxymethyluracil (5hmdU) into 5-phosphomethyl-2'-deoxyuridine (5- PmdU) on DNA as a step in the pathway leading to thymidine hypermodifications in the viral genome. The phosphate is added internally to the DNA polymer. As a final result of the pathway of hypermodification, 5-AcNmdU substitutes for a subset of thymidines in the viral DNA. These modifications probably prevent degradation of viral genome by the host restriction-modification antiviral defense system. The chain is 5-hmdU DNA kinase from Pseudomonas phage PaMx11.